The primary structure comprises 244 residues: Ribosomal RNA small subunit methyltransferase G (244 aa).

S-adenosyl-L-methionine contacts are provided by residues Gly79, Phe84, 102 to 104, 130 to 131, and Arg149; these read DST and AE. A disordered region spans residues 225 to 244; that stretch reads DRYPRREGVPNQQPLFWSAK. Residues 234 to 244 are compositionally biased toward polar residues; that stretch reads PNQQPLFWSAK.

This sequence belongs to the methyltransferase superfamily. RNA methyltransferase RsmG family.

It is found in the cytoplasm. Functionally, specifically methylates the N7 position of a guanine in 16S rRNA. This chain is Ribosomal RNA small subunit methyltransferase G, found in Deinococcus deserti (strain DSM 17065 / CIP 109153 / LMG 22923 / VCD115).